The chain runs to 653 residues: ATP-dependent zinc metalloprotease FtsH 1 (653 aa).

The segment at methionine 1–lysine 20 is disordered. Over methionine 1 to asparagine 30 the chain is Cytoplasmic. Residues isoleucine 31 to tryptophan 51 traverse the membrane as a helical segment. The Periplasmic portion of the chain corresponds to glutamate 52–tryptophan 126. A helical transmembrane segment spans residues tryptophan 127–leucine 147. The Cytoplasmic segment spans residues tyrosine 148–valine 653. Glycine 219–threonine 226 contributes to the ATP binding site. Histidine 441 provides a ligand contact to Zn(2+). The active site involves glutamate 442. Residues histidine 445 and aspartate 518 each coordinate Zn(2+).

This sequence in the central section; belongs to the AAA ATPase family. It in the C-terminal section; belongs to the peptidase M41 family. In terms of assembly, homohexamer. Requires Zn(2+) as cofactor.

It localises to the cell inner membrane. Its function is as follows. Acts as a processive, ATP-dependent zinc metallopeptidase for both cytoplasmic and membrane proteins. Plays a role in the quality control of integral membrane proteins. The sequence is that of ATP-dependent zinc metalloprotease FtsH 1 from Petrotoga mobilis (strain DSM 10674 / SJ95).